A 531-amino-acid polypeptide reads, in one-letter code: Histone-arginine methyltransferase CARMER (531 aa).

Positions 141 to 450 (ASQYFQFYGY…QSYDVTIDLH (310 aa)) constitute an SAM-dependent MTase PRMT-type domain. Positions 154, 163, 187, 209, 238, and 266 each coordinate S-adenosyl-L-methionine. An Asymmetric dimethylarginine; by autocatalysis modification is found at Arg501.

Belongs to the class I-like SAM-binding methyltransferase superfamily. Protein arginine N-methyltransferase family. As to quaternary structure, homodimer. Post-translationally, the dimethylated protein is the major form.

The protein resides in the cytoplasm. Its subcellular location is the nucleus. It catalyses the reaction L-arginyl-[protein] + 2 S-adenosyl-L-methionine = N(omega),N(omega)-dimethyl-L-arginyl-[protein] + 2 S-adenosyl-L-homocysteine + 2 H(+). In terms of biological role, methylates (mono- and asymmetric dimethylation) the guanidino nitrogens of arginyl residues in proteins. May methylate histone H3 at 'Arg-17' and activate transcription via chromatin remodeling. This Drosophila persimilis (Fruit fly) protein is Histone-arginine methyltransferase CARMER (Art4).